We begin with the raw amino-acid sequence, 184 residues long: Guanylate kinase (184 aa).

One can recognise a Guanylate kinase-like domain in the interval 4-182 (MGLTVLSGPS…AAARLVALMI (179 aa)). Residue 11–18 (GPSGVGKD) participates in ATP binding.

It belongs to the guanylate kinase family.

The protein resides in the cytoplasm. The enzyme catalyses GMP + ATP = GDP + ADP. Its function is as follows. Essential for recycling GMP and indirectly, cGMP. The sequence is that of Guanylate kinase from Frankia casuarinae (strain DSM 45818 / CECT 9043 / HFP020203 / CcI3).